The chain runs to 515 residues: Portal protein (515 aa).

The protein belongs to the podoviridae head-to-tail connector protein family. Homododecamer.

The protein localises to the virion. Functionally, forms the portal vertex of the capsid. This portal plays critical roles in head assembly, genome packaging, neck/tail attachment, and genome ejection. The portal protein multimerizes as a single ring-shaped homododecamer arranged around a central channel. This chain is Portal protein, found in Salmonella typhimurium (Bacteriophage SP6).